The primary structure comprises 325 residues: MSRPSSTGPSANKPCSKQPPPPQTPHAPSPAAPPAAATISAAGPGSSAVPAAAAVISGPGAGGGADPVSPQHHELTSLFECPVCFDYVLPPILQCQAGHLVCNQCRQKLSCCPTCRGALTPSIRNLAMEKVASAVLFPCKYATTGCSLTLHHTEKPEHEDICEYRPYSCPCPGASCKWQGSLEAVMSHLMHAHKSITTLQGEDIVFLATDINLPGAVDWVMMQSCFGHHFMLVLEKQEKYEGHQQFFAIVLLIGTRKQAENFAYRLELNGNRRRLTWEATPRSIHDGVAAAIMNSDCLVFDTAIAHLFADNGNLGINVTISTCCQ.

Positions 1 to 15 (MSRPSSTGPSANKPC) are enriched in polar residues. A disordered region spans residues 1-43 (MSRPSSTGPSANKPCSKQPPPPQTPHAPSPAAPPAAATISAAG). A Phosphoserine modification is found at Ser-6. Ser-16 is modified (phosphoserine; by DYRK2). The segment covering 17–33 (KQPPPPQTPHAPSPAAP) has biased composition (pro residues). Position 24 is a phosphothreonine; by MAPK14 (Thr-24). The residue at position 29 (Ser-29) is a Phosphoserine; by DYRK2 and MAPK14. A compositionally biased stretch (low complexity) spans 34–43 (PAAATISAAG). Ser-69 is subject to Phosphoserine; by DYRK2. The RING-type zinc finger occupies 81-116 (CPVCFDYVLPPILQCQAGHLVCNQCRQKLSCCPTCR). The residue at position 120 (Thr-120) is a Phosphothreonine; by DYRK2. The SBD stretch occupies residues 131–323 (VASAVLFPCK…LGINVTISTC (193 aa)). An SIAH-type zinc finger spans residues 134–194 (AVLFPCKYAT…VMSHLMHAHK (61 aa)). Residues Cys-139, Cys-146, His-158, Cys-162, Cys-169, Cys-176, His-188, and His-193 each contribute to the Zn(2+) site.

The protein belongs to the SINA (Seven in absentia) family. In terms of assembly, homodimer. Interacts with UBE2E2. Interacts with VAV1, without mediating its ubiquitin-mediated degradation. Interacts with CACYBP/SIP. Probable component of some large E3 complex possibly composed of UBE2D1, SIAH2, CACYBP/SIP, SKP1, APC and TBL1X. Interacts with UBE2I. Interacts with PEG10, which may inhibit its activity. Interacts with EGLN2 and SNCAIP. Interacts with DYRK2. Interacts with PEG3. Interacts with NR1D1 and NR1D2. Interacts with DCC. Interacts with AXIN1. Post-translationally, phosphorylated at Ser-29 by DYRK2; this increases the ubiquitin ligase activity and promotes degradation of EGLN3. Phosphorylated at Thr-24 and Ser-29 by MAPK14, which mediates the degradation by the proteasome of EGLN3. As to expression, widely expressed at low level in embryos and adults. Expressed in a specific population of germ cells within both the mouse ovary and testis. Absent in primordial oocytes but expressed in all growing oocytes, coincident with their recruitment from the pool of quiescent cells. Its level of expression increases as the oocytes mature. Expressed in Graafian follicles and in fertilized zygotes up until the two cell stage, a time of extensive maternal transcript degradation and zygotic gene activation. Expressed in the testis from postmeiotic spermatids.

The protein localises to the cytoplasm. It localises to the nucleus. It carries out the reaction S-ubiquitinyl-[E2 ubiquitin-conjugating enzyme]-L-cysteine + [acceptor protein]-L-lysine = [E2 ubiquitin-conjugating enzyme]-L-cysteine + N(6)-ubiquitinyl-[acceptor protein]-L-lysine.. It functions in the pathway protein modification; protein ubiquitination. In terms of biological role, E3 ubiquitin-protein ligase that mediates ubiquitination and subsequent proteasomal degradation of target proteins. E3 ubiquitin ligases accept ubiquitin from an E2 ubiquitin-conjugating enzyme in the form of a thioester and then directly transfers the ubiquitin to targeted substrates. Mediates E3 ubiquitin ligase activity either through direct binding to substrates or by functioning as the essential RING domain subunit of larger E3 complexes. Mediates ubiquitination and proteasomal degradation of DYRK2 in response to hypoxia. Promotes monoubiquitination of SNCA. Triggers the ubiquitin-mediated degradation of many substrates, including proteins involved in transcription regulation (GPS2, POU2AF1, PML, NCOR1), a cell surface receptor (DCC), an antiapoptotic protein (BAG1), and a protein involved in synaptic vesicle function in neurons (SYP). It is thereby involved in apoptosis, tumor suppression, cell cycle, transcription and signaling processes. Has some overlapping function with SIAH1. Triggers the ubiquitin-mediated degradation of TRAF2, whereas SIAH1 does not. Regulates cellular clock function via ubiquitination of the circadian transcriptional repressors NR1D1 and NR1D2 leading to their proteasomal degradation. Plays an important role in mediating the rhythmic degradation/clearance of NR1D1 and NR1D2 contributing to their circadian profile of protein abundance. Mediates ubiquitination and degradation of EGLN2 and EGLN3 in response to the unfolded protein response (UPR), leading to their degradation and subsequent stabilization of ATF4. Also part of the Wnt signaling pathway in which it mediates the Wnt-induced ubiquitin-mediated proteasomal degradation of AXIN1. The polypeptide is E3 ubiquitin-protein ligase SIAH2 (Siah2) (Mus musculus (Mouse)).